We begin with the raw amino-acid sequence, 230 residues long: Octanoyltransferase (230 aa).

In terms of domain architecture, BPL/LPL catalytic spans alanine 38–leucine 215. Substrate is bound by residues arginine 76–histidine 83, alanine 145–glycine 147, and glycine 158–alanine 160. Catalysis depends on cysteine 176, which acts as the Acyl-thioester intermediate.

This sequence belongs to the LipB family.

The protein localises to the cytoplasm. It carries out the reaction octanoyl-[ACP] + L-lysyl-[protein] = N(6)-octanoyl-L-lysyl-[protein] + holo-[ACP] + H(+). It participates in protein modification; protein lipoylation via endogenous pathway; protein N(6)-(lipoyl)lysine from octanoyl-[acyl-carrier-protein]: step 1/2. Catalyzes the transfer of endogenously produced octanoic acid from octanoyl-acyl-carrier-protein onto the lipoyl domains of lipoate-dependent enzymes. Lipoyl-ACP can also act as a substrate although octanoyl-ACP is likely to be the physiological substrate. This chain is Octanoyltransferase, found in Mycobacterium tuberculosis (strain ATCC 25177 / H37Ra).